The following is a 372-amino-acid chain: tRNA-specific 2-thiouridylase MnmA (372 aa).

ATP contacts are provided by residues 16-23 (GMSGGVDS) and M42. The segment at 102–104 (NPD) is interaction with target base in tRNA. C107 serves as the catalytic Nucleophile. A disulfide bridge connects residues C107 and C205. G132 contributes to the ATP binding site. Positions 155–157 (KDQ) are interaction with tRNA. Catalysis depends on C205, which acts as the Cysteine persulfide intermediate. An interaction with tRNA region spans residues 317 to 318 (RY).

The protein belongs to the MnmA/TRMU family.

The protein resides in the cytoplasm. The enzyme catalyses S-sulfanyl-L-cysteinyl-[protein] + uridine(34) in tRNA + AH2 + ATP = 2-thiouridine(34) in tRNA + L-cysteinyl-[protein] + A + AMP + diphosphate + H(+). Functionally, catalyzes the 2-thiolation of uridine at the wobble position (U34) of tRNA, leading to the formation of s(2)U34. The protein is tRNA-specific 2-thiouridylase MnmA of Shewanella baltica (strain OS185).